Reading from the N-terminus, the 264-residue chain is 14-3-3-like protein GF14-A (264 aa).

The segment at Asp245–His264 is disordered. Residues Asp252–His264 are compositionally biased toward basic and acidic residues.

Belongs to the 14-3-3 family.

Is associated with a DNA binding complex that binds to the G box, a well-characterized cis-acting DNA regulatory element found in plant genes. The chain is 14-3-3-like protein GF14-A (GF14A) from Oryza sativa subsp. japonica (Rice).